The following is a 187-amino-acid chain: Orotate phosphoribosyltransferase (187 aa).

5-phospho-alpha-D-ribose 1-diphosphate is bound by residues arginine 98, lysine 99, lysine 102, histidine 104, and 128 to 136 (EDVTTTGGS). Residues threonine 132 and arginine 160 each coordinate orotate.

The protein belongs to the purine/pyrimidine phosphoribosyltransferase family. PyrE subfamily. As to quaternary structure, homodimer. It depends on Mg(2+) as a cofactor.

The catalysed reaction is orotidine 5'-phosphate + diphosphate = orotate + 5-phospho-alpha-D-ribose 1-diphosphate. It participates in pyrimidine metabolism; UMP biosynthesis via de novo pathway; UMP from orotate: step 1/2. Catalyzes the transfer of a ribosyl phosphate group from 5-phosphoribose 1-diphosphate to orotate, leading to the formation of orotidine monophosphate (OMP). The polypeptide is Orotate phosphoribosyltransferase (Rhodopseudomonas palustris (strain BisB18)).